A 328-amino-acid chain; its full sequence is Flotillin-like protein FloA (328 aa).

The next 2 membrane-spanning stretches (helical) occupy residues 1 to 21 and 26 to 46; these read MFGL…LVLF and VGLW…TLVG.

The protein belongs to the flotillin-like FloA family. As to quaternary structure, homooligomerizes.

It is found in the cell membrane. The protein resides in the membrane raft. Its function is as follows. Found in functional membrane microdomains (FMM) that may be equivalent to eukaryotic membrane rafts. FMMs are highly dynamic and increase in number as cells age. Flotillins are thought to be important factors in membrane fluidity. This chain is Flotillin-like protein FloA, found in Staphylococcus haemolyticus (strain JCSC1435).